Reading from the N-terminus, the 681-residue chain is Transmembrane protein 168-A (681 aa).

A run of 9 helical transmembrane segments spans residues Phe16–Met36, Met47–Tyr67, Ser73–Leu93, Pro135–Ser155, Leu156–Ile176, Leu184–Leu204, Phe252–Leu272, Val281–Val301, and Leu346–Ala365. Asn517 is a glycosylation site (N-linked (GlcNAc...) asparagine).

It belongs to the TMEM168 family.

It is found in the nucleus membrane. Plays a key role in maintaining the cardiac electrical stability by modulating cell surface expression of SCN5A. This chain is Transmembrane protein 168-A (tmem168a), found in Danio rerio (Zebrafish).